The sequence spans 101 residues: MAKVSSVQKNLKRSKLFNKLKLKRQALKSKIYDKNLSLEERFNLVLKLSKLPRNSSSTRIRNRCAETGRPRGYYRKFKLCRNIIRELAGSGIIPGLRKSSW.

The protein belongs to the universal ribosomal protein uS14 family. In terms of assembly, part of the 30S ribosomal subunit. Contacts proteins S3 and S10.

In terms of biological role, binds 16S rRNA, required for the assembly of 30S particles and may also be responsible for determining the conformation of the 16S rRNA at the A site. The sequence is that of Small ribosomal subunit protein uS14 from Orientia tsutsugamushi (strain Ikeda) (Rickettsia tsutsugamushi).